Consider the following 567-residue polypeptide: Septation ring formation regulator EzrA (567 aa).

Residues 1-2 (ME) lie on the Extracellular side of the membrane. A helical membrane pass occupies residues 3–21 (FIIGLIVILLALFSVGYFL). The Cytoplasmic portion of the chain corresponds to 22–567 (RKNIYKEIDR…AQQEKEYQHQ (546 aa)). Coiled-coil stretches lie at residues 108–185 (IEDL…YEEE), 243–375 (KGYK…RDHV), and 402–529 (KGHL…ERRF).

It belongs to the EzrA family.

The protein resides in the cell membrane. Functionally, negative regulator of FtsZ ring formation; modulates the frequency and position of FtsZ ring formation. Inhibits FtsZ ring formation at polar sites. Interacts either with FtsZ or with one of its binding partners to promote depolymerization. The protein is Septation ring formation regulator EzrA of Bacillus pumilus (strain SAFR-032).